The primary structure comprises 1423 residues: Autophagy-related protein 11 (1423 aa).

Coiled-coil stretches lie at residues 551–589 (DDELLRSLQDDKSKLESKLKTAESRVRRLEDLLHRQSQA) and 625–978 (SEGT…ASEL). Disordered stretches follow at residues 583–660 (LHRQ…SNRA) and 1028–1048 (RAERAAQNPNDSSDPGTSLRK). A compositionally biased stretch (polar residues) spans 585-602 (RQSQASRPGNLFQPQTNS). Residues 631–648 (LLRRISELENELREEKQR) are compositionally biased toward basic and acidic residues. 2 stretches are compositionally biased toward polar residues: residues 650-660 (SRIQNDLSNRA) and 1034-1047 (QNPNDSSDPGTSLR). The stretch at 1102–1130 (HRIKEVEHKARKWQKEARSYRDRAHIAQK) forms a coiled coil. The tract at residues 1327 to 1423 (SLRAAAPETP…DYTYESPGKK (97 aa)) is disordered. Basic and acidic residues predominate over residues 1383–1395 (KTAEPRRMLDRQE).

This sequence belongs to the ATG11 family. Homodimer and potential homooligomers. Interacts with ATG1 kinase and the ATG19 and ATG34 cargo protein transporters. Interacts with ATG9, ATG17 and ATG20.

It localises to the preautophagosomal structure membrane. Its subcellular location is the vacuole membrane. Functionally, involved in cytoplasm to vacuole transport (Cvt), pexophagy, mitophagy and nucleophagy. Recruits mitochondria for their selective degradation via autophagy (mitophagy) during starvation, through its interaction with ATG32. Works as scaffold proteins that recruit ATG proteins to the pre-autophagosome (PAS), the site of vesicle/autophagosome formation. Required for ATG9 anterograde transport from the mitochondria to the PAS. Also recruits the ATG19-prAPE1 complex to the PAS. Required for the Cvt vesicles completion. Plays a role in morphological differentiation and cephalosporin production. This Hapsidospora chrysogena (Acremonium chrysogenum) protein is Autophagy-related protein 11.